Consider the following 109-residue polypeptide: Small ribosomal subunit protein bS6 (109 aa).

It belongs to the bacterial ribosomal protein bS6 family.

Functionally, binds together with bS18 to 16S ribosomal RNA. This is Small ribosomal subunit protein bS6 from Anaplasma phagocytophilum (strain HZ).